A 544-amino-acid polypeptide reads, in one-letter code: CTP synthase (544 aa).

The interval 1–266 is amidoligase domain; it reads MKYIFVTGGV…GKAVEELLGL (266 aa). Ser-12 contributes to the CTP binding site. A UTP-binding site is contributed by Ser-12. ATP is bound at residue 13–18; sequence SLGKGV. Tyr-53 contributes to the L-glutamine binding site. Asp-70 lines the ATP pocket. Asp-70 and Glu-140 together coordinate Mg(2+). CTP is bound by residues 147-149, 187-192, and Lys-223; these read DIE and KTKPTQ. UTP contacts are provided by residues 187 to 192 and Lys-223; that span reads KTKPTQ. A Glutamine amidotransferase type-1 domain is found at 291 to 544; it reads TIAIAGKYTA…VKAALEHQQQ (254 aa). Gly-356 contributes to the L-glutamine binding site. The active-site Nucleophile; for glutamine hydrolysis is the Cys-383. Residues 384 to 387, Glu-407, and Arg-467 contribute to the L-glutamine site; that span reads LGMQ. Active-site residues include His-517 and Glu-519.

Belongs to the CTP synthase family. Homotetramer.

It carries out the reaction UTP + L-glutamine + ATP + H2O = CTP + L-glutamate + ADP + phosphate + 2 H(+). The catalysed reaction is L-glutamine + H2O = L-glutamate + NH4(+). It catalyses the reaction UTP + NH4(+) + ATP = CTP + ADP + phosphate + 2 H(+). It participates in pyrimidine metabolism; CTP biosynthesis via de novo pathway; CTP from UDP: step 2/2. Its activity is regulated as follows. Allosterically activated by GTP, when glutamine is the substrate; GTP has no effect on the reaction when ammonia is the substrate. The allosteric effector GTP functions by stabilizing the protein conformation that binds the tetrahedral intermediate(s) formed during glutamine hydrolysis. Inhibited by the product CTP, via allosteric rather than competitive inhibition. In terms of biological role, catalyzes the ATP-dependent amination of UTP to CTP with either L-glutamine or ammonia as the source of nitrogen. Regulates intracellular CTP levels through interactions with the four ribonucleotide triphosphates. The protein is CTP synthase of Deinococcus radiodurans (strain ATCC 13939 / DSM 20539 / JCM 16871 / CCUG 27074 / LMG 4051 / NBRC 15346 / NCIMB 9279 / VKM B-1422 / R1).